We begin with the raw amino-acid sequence, 105 residues long: Small ribosomal subunit protein uS10 (105 aa).

This sequence belongs to the universal ribosomal protein uS10 family. Part of the 30S ribosomal subunit.

Its function is as follows. Involved in the binding of tRNA to the ribosomes. In Chlamydia abortus (strain DSM 27085 / S26/3) (Chlamydophila abortus), this protein is Small ribosomal subunit protein uS10.